The chain runs to 197 residues: GTP cyclohydrolase-2 (197 aa).

Residue 50 to 54 (RIHSE) coordinates GTP. Zn(2+) is bound by residues Cys-55, Cys-66, and Cys-68. GTP-binding positions include Gln-71, 93–95 (EGR), and Thr-115. The active-site Proton acceptor is Asp-127. Arg-129 (nucleophile) is an active-site residue. Thr-150 and Lys-155 together coordinate GTP.

Belongs to the GTP cyclohydrolase II family. Zn(2+) is required as a cofactor.

The enzyme catalyses GTP + 4 H2O = 2,5-diamino-6-hydroxy-4-(5-phosphoribosylamino)-pyrimidine + formate + 2 phosphate + 3 H(+). It participates in cofactor biosynthesis; riboflavin biosynthesis; 5-amino-6-(D-ribitylamino)uracil from GTP: step 1/4. Its function is as follows. Catalyzes the conversion of GTP to 2,5-diamino-6-ribosylamino-4(3H)-pyrimidinone 5'-phosphate (DARP), formate and pyrophosphate. In Neisseria gonorrhoeae (strain ATCC 700825 / FA 1090), this protein is GTP cyclohydrolase-2.